The primary structure comprises 252 residues: Trans-aconitate 2-methyltransferase (252 aa).

It belongs to the methyltransferase superfamily. Tam family.

Its subcellular location is the cytoplasm. It carries out the reaction trans-aconitate + S-adenosyl-L-methionine = (E)-3-(methoxycarbonyl)pent-2-enedioate + S-adenosyl-L-homocysteine. Catalyzes the S-adenosylmethionine monomethyl esterification of trans-aconitate. In Escherichia coli O9:H4 (strain HS), this protein is Trans-aconitate 2-methyltransferase.